The primary structure comprises 157 residues: Small ribosomal subunit protein uS13 (157 aa).

It belongs to the universal ribosomal protein uS13 family. Part of the 30S ribosomal subunit. Forms a loose heterodimer with protein S19. Forms two bridges to the 50S subunit in the 70S ribosome.

Its function is as follows. Located at the top of the head of the 30S subunit, it contacts several helices of the 16S rRNA. In the 70S ribosome it contacts the 23S rRNA (bridge B1a) and protein L5 of the 50S subunit (bridge B1b), connecting the 2 subunits; these bridges are implicated in subunit movement. This is Small ribosomal subunit protein uS13 from Thermofilum pendens (strain DSM 2475 / Hrk 5).